Here is a 296-residue protein sequence, read N- to C-terminus: Circadian clock oscillator protein KaiA (296 aa).

Residues 2–133 (ARPGLTIALL…LRQGRADGRS (132 aa)) form a psR domain, binds oxidized quinones region. The KaiA N-terminal domain maps to 2–152 (ARPGLTIALL…KLSRRLQERL (151 aa)). Residues 153 to 161 (GYLGVFYKR) form a flexible linker region. In terms of domain architecture, KaiA C-terminal spans 162-270 (DPSRFLGSLP…CEMYRRSIPP (109 aa)).

Homodimer. The KaiABC complex composition changes during the circadian cycle to control KaiC phosphorylation. Complexes KaiC(6), KaiA(2-4):KaiC(6), KaiB(6):KaiC(6) and KaiC(6):KaiB(6):KaiA(12) are among the most important forms, many form cooperatively. KaiA and CikA bind to the same region of the KaiB(fs) form and therefore compete.

Its function is as follows. Key component of the KaiABC oscillator complex, which constitutes the main circadian regulator in cyanobacteria. Complex composition changes during the circadian cycle to control KaiC phosphorylation. KaiA stimulates KaiC autophosphorylation, while KaiB sequesters KaiA, leading to KaiC autodephosphorylation. KaiA binding to the KaiC CII domain during the subjective day yields KaiA(2-4):KaiC(6) complexes which stimulate KaiC autophosphorylation. Phospho-Ser-431 KaiC accumulation triggers binding of KaiB during the subjective night to form the KaiB(6):KaiC(6) complex, leading to changes in the output regulators CikA and SasA. KaiB(6):KaiC(6) formation exposes a site for KaiA binding on KaiB that sequesters KaiA from KaiC's CII domain, making the KaiC(6):KaiB(6):KaiA(12) complex resulting in KaiC autodephosphorylation. Complete dephosphorylation of KaiC leads to dissociation of KaiA(2):KaiB(1), completing 1 cycle of the Kai oscillator. Functionally, binds oxidized quinones via the N-terminal PsR domain, allowing it to sense redox changes and possibly mediate clock input. This Parasynechococcus marenigrum (strain WH8102) protein is Circadian clock oscillator protein KaiA.